We begin with the raw amino-acid sequence, 318 residues long: Ribose-phosphate pyrophosphokinase 3 (318 aa).

96–101 (RQDKKD) lines the ATP pocket. Residues D128, H130, D139, and D143 each coordinate Mg(2+). H130 serves as a coordination point for ATP. The segment at 212–227 (NDRVAILVDDMADTCV) is binding of phosphoribosylpyrophosphate.

It belongs to the ribose-phosphate pyrophosphokinase family. As to quaternary structure, homodimer. The active form is probably a hexamer composed of 3 homodimers. The cofactor is Mg(2+). Testis.

It carries out the reaction D-ribose 5-phosphate + ATP = 5-phospho-alpha-D-ribose 1-diphosphate + AMP + H(+). It functions in the pathway metabolic intermediate biosynthesis; 5-phospho-alpha-D-ribose 1-diphosphate biosynthesis; 5-phospho-alpha-D-ribose 1-diphosphate from D-ribose 5-phosphate (route I): step 1/1. With respect to regulation, activated by magnesium and inorganic phosphate. In terms of biological role, catalyzes the synthesis of phosphoribosylpyrophosphate (PRPP) that is essential for nucleotide synthesis. The sequence is that of Ribose-phosphate pyrophosphokinase 3 (PRPS1L1) from Homo sapiens (Human).